A 433-amino-acid chain; its full sequence is MSNRVVIIGRPNVGKSTLFNRIIGKRYAIVEDYPGVTRDKIEAKAEWAGKEFIIVDTGGLVPETKDELIREVKKVVEQEIPKADVILFVVDGKEGLNPLDQEIAKYLYPYADKVLLVVNKIDNLRQEKNVAEFYTLGFEKIFPISAQHGKGVGELLDEVVKYLKEEKVETVEEGIKVAFIGRPNVGKSSLVNAILKDERVIVSPIAGTTRDAIEIPFRWKDKNFILIDTAGVRRPSNVEYGIEFYSVGRSLKAIDLADVCCLVIDASEGPTRQDKRLGGLIERRYKGCVIVANKMDISPWSEEELEGIIRKELFFLDFAPIVFTVATKGKGVEELLNWIDVVYKDYTKQHKTSFVNRAVHKILSEKPPPRYRGKEVKVYYAFQESTKPPTIVLITNYPDAWKENYKRFFIKKLREYLNIKYAPIKLVIKGRED.

EngA-type G domains lie at Asn-3–Lys-167 and Ile-175–Thr-347. GTP-binding positions include Gly-9–Ser-16, Asp-56–Leu-60, Asn-119–Asp-122, Gly-181–Ser-188, Asp-228–Val-232, and Asn-293–Asp-296. Residues Lys-348–Glu-432 enclose the KH-like domain.

Belongs to the TRAFAC class TrmE-Era-EngA-EngB-Septin-like GTPase superfamily. EngA (Der) GTPase family. Associates with the 50S ribosomal subunit.

Functionally, GTPase that plays an essential role in the late steps of ribosome biogenesis. The chain is GTPase Der from Aquifex aeolicus (strain VF5).